We begin with the raw amino-acid sequence, 1118 residues long: Sodium-driven chloride bicarbonate exchanger (1118 aa).

4 disordered regions span residues 1 to 23, 58 to 96, 245 to 312, and 457 to 476; these read MEIK…EEAV, GRKS…DTPS, KQSE…PPHQ, and NGTA…GPEL. Topologically, residues 1 to 509 are cytoplasmic; sequence MEIKDQGAQM…DFRDAFSLQC (509 aa). Over residues 59–76 the composition is skewed to basic residues; it reads RKSHRRHRHRGHKHRKRD. Residues 77-90 show a composition bias toward basic and acidic residues; it reads RERDSGLEDGRESP. Phosphoserine is present on serine 89. Threonine 94 carries the phosphothreonine modification. Residues 248 to 264 are compositionally biased toward polar residues; that stretch reads EPNSMDKNAGQVVSPQS. A Phosphoserine modification is found at serine 276. Residues 510–530 form a helical membrane-spanning segment; sequence LASFLFLYCACMSPVITFGGL. Topologically, residues 531–538 are extracellular; that stretch reads LGEATEGR. The helical transmembrane segment at 539–559 threads the bilayer; sequence ISAIESLFGASMTGIAYSLFG. The Cytoplasmic segment spans residues 560 to 562; it reads GQP. The chain crosses the membrane as a helical span at residues 563–583; it reads LTILGSTGPVLVFEKILFKFC. Topologically, residues 584-596 are extracellular; it reads KEYGLSYLSLRAS. Residues 597–617 form a helical membrane-spanning segment; sequence IGLWTATLCIILVATDASSLV. The Cytoplasmic segment spans residues 618 to 626; it reads CYITRFTEE. The chain crosses the membrane as a helical span at residues 627-647; it reads AFASLICIIFIYEALEKLFEL. At 648-720 the chain is on the extracellular side; sequence SEAYPINMHN…VGRACGHDHP (73 aa). Asparagine 674, asparagine 677, asparagine 687, and asparagine 697 each carry an N-linked (GlcNAc...) asparagine glycan. Residues 721-741 form a helical membrane-spanning segment; that stretch reads YVPDVLFWSVILFFSTVTLSA. The Cytoplasmic segment spans residues 742–762; the sequence is TLKQFKTSRYFPTKVRSIVSD. Residues 763–783 traverse the membrane as a helical segment; that stretch reads FAVFLTILCMVLIDYAIGIPS. The Extracellular portion of the chain corresponds to 784–809; it reads PKLQVPSVFKPTRDDRGWFVTPLGPN. Residues 810-830 form a helical membrane-spanning segment; that stretch reads PWWTVIAAIIPALLCTILIFM. The Cytoplasmic portion of the chain corresponds to 831–855; that stretch reads DQQITAVIINRKEHKLKKGCGYHLD. Residues 856 to 876 traverse the membrane as a helical segment; sequence LLMVAVMLGVCSIMGLPWFVA. Topologically, residues 877 to 912 are extracellular; that stretch reads ATVLSITHVNSLKLESECSAPGEQPKFLGIREQRVT. A helical transmembrane segment spans residues 913–933; the sequence is GLMIFILMGSSVFMTSILKFI. The Cytoplasmic portion of the chain corresponds to 934–935; sequence PM. Residues 936-956 form a helical membrane-spanning segment; the sequence is PVLYGVFLYMGASSLKGIQFF. Topologically, residues 957 to 998 are extracellular; that stretch reads DRIKLFWMPAKHQPDFIYLRHVPLRKVHLFTIIQMSCLGLLW. Residues 999-1019 traverse the membrane as a helical segment; sequence IIKVSRAAIVFPMMVLALVFV. At 1020 to 1118 the chain is on the cytoplasmic side; the sequence is RKLMDLLFTK…SSFPSKSSPS (99 aa). 2 positions are modified to phosphoserine: serine 1057 and serine 1085.

Belongs to the anion exchanger (TC 2.A.31) family. As to expression, predominantly expressed in the brain.

Its subcellular location is the basolateral cell membrane. It is found in the apical cell membrane. The protein localises to the cell projection. The protein resides in the dendrite. It localises to the axon. Its subcellular location is the perikaryon. It is found in the presynapse. The protein localises to the postsynapse. The enzyme catalyses 2 hydrogencarbonate(out) + chloride(in) + Na(+)(out) = 2 hydrogencarbonate(in) + chloride(out) + Na(+)(in). Functionally, sodium/bicarbonate cotransporter which plays an important role in regulating intracellular pH. Has been shown to act as a sodium/bicarbonate cotransporter in exchange for intracellular chloride. Has also been shown to act as a sodium/biocarbonate cotransporter which does not couple net influx of bicarbonate to net efflux of chloride, with the observed chloride efflux being due to chloride self-exchange. Controls neuronal pH and may contribute to the secretion of cerebrospinal fluid. Acting on presynaptic intracellular pH, it promotes GABA release, reduces the excitability of CA1 pyramidal neurons, and modulates short-term synaptic plasticity. Required in retinal cells to maintain normal pH which is necessary for normal vision. In the kidney, likely to mediate bicarbonate reclamation in the apical membrane of the proximal tubules. This chain is Sodium-driven chloride bicarbonate exchanger, found in Homo sapiens (Human).